The sequence spans 357 residues: Velvet complex subunit 2 (357 aa).

The 310-residue stretch at Arg-32–Arg-341 folds into the Velvet domain.

Belongs to the velvet family. VelB subfamily. As to quaternary structure, component of the heterotrimeric velvet complex composed of LAE1, VEL1 and VEL2; VEL1A acting as a bridging protein between LAE1 and VEL2. Forms a heterodimeric complex with VOS1; the formation of the VEL2-VOS1 complex is light-dependent.

It localises to the nucleus. The protein localises to the cytoplasm. Its function is as follows. Component of the velvet transcription factor complex that controls sexual/asexual developmental ratio in response to light, promoting sexual development in the darkness while stimulating asexual sporulation under illumination. The velvet complex acts as a global regulator for secondary metabolite gene expression. Component of the VEL2-VOS1 heterodimeric complex that plays a dual role in activating genes associated with spore maturation and repressing certain development-associated genes. The complex binds DNA through the DNA-binding domain of VOS1 that recognizes an 11-nucleotide consensus sequence 5'-CTGGCCGCGGC-3' consisting of two motifs in the promoters of key developmental regulatory genes. The VEL2-VOS1 complex is required for normal pseudothecium development and regulates asexual spore compartmentalization, pigmentation and germination. This is Velvet complex subunit 2 from Cochliobolus heterostrophus (strain C5 / ATCC 48332 / race O) (Southern corn leaf blight fungus).